The primary structure comprises 59 residues: Small ribosomal subunit protein bS21 (59 aa).

The disordered stretch occupies residues 40–59; that stretch reads KPSIKKRAKSKAALKYKKQR.

Belongs to the bacterial ribosomal protein bS21 family.

This chain is Small ribosomal subunit protein bS21, found in Protochlamydia amoebophila (strain UWE25).